A 904-amino-acid chain; its full sequence is Envelope glycoprotein B (904 aa).

A signal peptide spans 1–22 (MRGGGLICALVVGALVAAVASA). Residues 23 to 771 (APAAPAAPRA…SGVSSFMSNP (749 aa)) are Virion surface-facing. The segment at 40-83 (VAANGGPASRPPPVPSPATTKARKRKTKKPPKRPEATPPPDANA) is disordered. The segment covering 60–70 (KARKRKTKKPP) has biased composition (basic residues). Asn-82 and Asn-136 each carry an N-linked (GlcNAc...) asparagine; by host glycan. 5 cysteine pairs are disulfide-bonded: Cys-111/Cys-570, Cys-128/Cys-526, Cys-202/Cys-266, Cys-359/Cys-407, and Cys-593/Cys-630. 2 involved in fusion and/or binding to host membrane regions span residues 168 to 174 (VWFGHRY) and 253 to 260 (RVEAFHRY). Residues Asn-393, Asn-425, and Asn-486 are each glycosylated (N-linked (GlcNAc...) asparagine; by host). Positions 467-490 (QDRKPRNATPAPLREAPSANASVE) are disordered. N-linked (GlcNAc...) asparagine; by host glycosylation is present at Asn-671. 2 hydrophobic membrane proximal region regions span residues 716 to 769 (IDTV…SFMS) and 728 to 768 (MFAG…SSFM). A helical transmembrane segment spans residues 772–792 (FGALAVGLLVLAGLVAAFFAF). Over 793–904 (RYVLQLQRNP…EDEAGDEDEL (112 aa)) the chain is Intravirion. The tract at residues 816-835 (TSDPGGVGGEGEEGAEGGGF) is disordered. The Golgi targeting motif lies at 849–852 (YMAL). The disordered stretch occupies residues 883–904 (KRNKARYSPLHNEDEAGDEDEL). Residues 889 to 892 (YSPL) carry the Internalization motif motif.

This sequence belongs to the herpesviridae glycoprotein B family. In terms of assembly, homotrimer; disulfide-linked. Binds to heparan sulfate proteoglycans. Interacts with gH/gL heterodimer.

It is found in the virion membrane. The protein resides in the host cell membrane. The protein localises to the host endosome membrane. It localises to the host Golgi apparatus membrane. Functionally, envelope glycoprotein that forms spikes at the surface of virion envelope. Essential for the initial attachment to heparan sulfate moieties of the host cell surface proteoglycans. Involved in fusion of viral and cellular membranes leading to virus entry into the host cell. Following initial binding to its host receptors, membrane fusion is mediated by the fusion machinery composed at least of gB and the heterodimer gH/gL. May be involved in the fusion between the virion envelope and the outer nuclear membrane during virion egress. This chain is Envelope glycoprotein B, found in Homo sapiens (Human).